The primary structure comprises 662 residues: Threonine--tRNA ligase (662 aa).

A TGS domain is found at 1–64 (MSQSVSLTFP…ADGKIEIITR (64 aa)). Residues 245-547 (DHRRLGREMD…LIENFAGHMP (303 aa)) are catalytic. 3 residues coordinate Zn(2+): cysteine 341, histidine 392, and histidine 524.

It belongs to the class-II aminoacyl-tRNA synthetase family. As to quaternary structure, homodimer. Zn(2+) is required as a cofactor.

The protein localises to the cytoplasm. The catalysed reaction is tRNA(Thr) + L-threonine + ATP = L-threonyl-tRNA(Thr) + AMP + diphosphate + H(+). Catalyzes the attachment of threonine to tRNA(Thr) in a two-step reaction: L-threonine is first activated by ATP to form Thr-AMP and then transferred to the acceptor end of tRNA(Thr). Also edits incorrectly charged L-seryl-tRNA(Thr). The polypeptide is Threonine--tRNA ligase (Rhizobium rhizogenes (strain K84 / ATCC BAA-868) (Agrobacterium radiobacter)).